The sequence spans 295 residues: MPVYEHLLPVNGAWRQDVTNWLSEDVPSFDFGGYVVGSDLKEANLYCKQDGMLCGVPFAQEVFNQCELQVEWLFKEGSFLEPSKNDSGKIVVAKITGPAKNILLAERTALNILSRSSGIATASHKIISLARSTGYKGTIAGTRKTTPGLRRLEKYSMLVGGCDTHRYDLSSMVMLKDNHIWATGSITNAVKNARAVCGFAVKIEVECLSEDEATEAIEAGADVIMLDNFKGDGLKMCAQSLKNKWNGKKHFLLECSGGLNLDNLEEYLCDDIDIYSTSSIHQGTPVIDFSLKLAH.

Substrate contacts are provided by residues arginine 107, 142-144, arginine 166, lysine 176, glutamate 206, aspartate 227, and 256-258; these read TRK and SGG.

The protein belongs to the NadC/ModD family. In terms of assembly, hexamer formed by 3 homodimers.

It is found in the cytoplasm. The protein resides in the nucleus. The enzyme catalyses nicotinate beta-D-ribonucleotide + CO2 + diphosphate = quinolinate + 5-phospho-alpha-D-ribose 1-diphosphate + 2 H(+). The protein operates within cofactor biosynthesis; NAD(+) biosynthesis; nicotinate D-ribonucleotide from quinolinate: step 1/1. In terms of biological role, involved in the catabolism of quinolinic acid (QA). This Saccharomyces cerevisiae (strain ATCC 204508 / S288c) (Baker's yeast) protein is Nicotinate-nucleotide pyrophosphorylase [carboxylating] (BNA6).